A 460-amino-acid polypeptide reads, in one-letter code: Bifunctional beta-D-glucosidase/beta-D-fucosidase (460 aa).

The Proton donor role is filled by Glu-168. Glu-362 acts as the Nucleophile in catalysis.

It belongs to the glycosyl hydrolase 1 family. In terms of assembly, monomer.

It is found in the secreted. The enzyme catalyses Hydrolysis of terminal, non-reducing beta-D-glucosyl residues with release of beta-D-glucose.. It catalyses the reaction Hydrolysis of terminal non-reducing beta-D-fucose residues in beta-D-fucosides.. Its activity is regulated as follows. Inhibited by Cu(2+), Ag(+) and Hg(+), but not by other cations such as Mg(2+), Ca(2+), Mn(2+) and Co(2+). Inhibited by 1-amino-1-deoxy-D-glucose and p-chloromercuribenzoic acid, but not by EDTA or dithiothreitol. Inhibited by the disaccharides sucrose, lactose and cellobiose. The monosaccharides D-fructose, D-mannose, D-xylose and D-glucose increase the beta-D-fucosidase activity, but not the beta-D-glucosidase activity. D-glucose inhibits the beta-D-glucosidase activity, but promotes the beta-D-fucosidase activity. D-fucose inhibits the beta-D-glucosidase activity and does not significantly affect the beta-D-fucosidase activity. Functionally, bifunctional beta-D-glucosidase/beta-D-fucosidase. Activity towards pNP-beta-D-fucoside is about 80-85% of the activity towards pNP-beta-D-glucoside. Also has slight activity (less than 10%) towards pNP-beta-D-galactoside, and very low activity (less than 1%) towards pNP-beta-D-xyloside. Hydrolyzes laminaribiose, sophorose, cellobiose and gentobiose. Not active against maltose, pNP-alpha-D-glucoside or pNP-beta-L-fucoside. This is Bifunctional beta-D-glucosidase/beta-D-fucosidase from Bifidobacterium breve.